A 225-amino-acid polypeptide reads, in one-letter code: Techylectin-like protein (225 aa).

Residues 32–225 enclose the Fibrinogen C-terminal domain; it reads CPSPPLPIDC…WTEIKIKDVK (194 aa). Cysteines 41 and 60 form a disulfide. Residues 75 to 77 carry the Cell attachment site motif; sequence RGD. Positions 164 and 170 each coordinate Ca(2+). A disulfide bond links Cys-172 and Cys-185.

In terms of tissue distribution, expressed by the venom gland.

The protein resides in the secreted. Its function is as follows. Lectin involved in innate immunity. In Phoneutria nigriventer (Brazilian armed spider), this protein is Techylectin-like protein.